A 259-amino-acid polypeptide reads, in one-letter code: MSGPILVFDSGIGGLSVMNEIRKQLPLHDYCYLFDNARLPYGNLSEQELITGCVALITHHARRLNASIVVVACNTASTLVLPLLRQQLTIPIVGVVPAIKPAAMLSKKKHIGLLATPGTVKRDYTQALINQFAGNCKVELFGTSDLVLLAEQYVAQQQIDMDKLNEILAPIAASNIDVLVLGCTHFPMIATEISHYLGEGVTLLDSGEAVAKRVRFLLSKESNSNKQLQACYTKDIGQGLKAALVDYGFSDFSLVTITD.

Residues 9–10 (DS) and 41–42 (YG) each bind substrate. Residue Cys73 is the Proton donor/acceptor of the active site. Residue 74-75 (NT) participates in substrate binding. Residue Cys183 is the Proton donor/acceptor of the active site. 184–185 (TH) contacts substrate.

Belongs to the aspartate/glutamate racemases family.

It catalyses the reaction L-glutamate = D-glutamate. Its pathway is cell wall biogenesis; peptidoglycan biosynthesis. Its function is as follows. Provides the (R)-glutamate required for cell wall biosynthesis. The protein is Glutamate racemase of Shewanella frigidimarina (strain NCIMB 400).